The sequence spans 1044 residues: AT-rich interactive domain-containing protein 5B (1044 aa).

Disordered regions lie at residues 143–211, 301–350, 363–392, 554–591, 603–672, 733–767, 811–835, and 884–912; these read PRKK…GDEC, RFTK…GDKD, MEELQEKQNSQQLQAPTQTDRDPNSPLTED, NNYPYGPPPPLVSRRLSSSGTEVSSAGQSSSQVSSSVE, QHAQ…SFLS, SQKEKGPPPERVTEEQPTDLSLPKSSPLKLPLSTS, VSASKKVTESHSKVLEKTPNSRGEE, and TPLHCSTQRDLPGKPRTPEADSESVKPAE. Basic and acidic residues-rich tracts occupy residues 197 to 211, 301 to 310, and 337 to 350; these read VQSENKPKGDGGDEC, RFTKGEEDKP, and RPKDEQKTPRGDKD. One can recognise an ARID domain in the interval 212-304; that stretch reads RTDEQAFLVA…LILPYERFTK (93 aa). Over residues 369–380 the composition is skewed to polar residues; that stretch reads KQNSQQLQAPTQ. Positions 565–591 are enriched in low complexity; sequence VSRRLSSSGTEVSSAGQSSSQVSSSVE. Basic and acidic residues-rich tracts occupy residues 611-635, 644-660, and 733-746; these read RGSEDRRSSTEGSQKDGCSEGEPVH, PYLKRVDPHSSMEKSAE, and SQKEKGPPPERVTE. Low complexity predominate over residues 752–767; sequence LSLPKSSPLKLPLSTS. 2 stretches are compositionally biased toward basic and acidic residues: residues 816–826 and 894–909; these read KVTESHSKVLE and LPGKPRTPEADSESVK.

The protein belongs to the ARID5B family.

It localises to the nucleus. Transcription coactivator that binds to the 5'-AATA[CT]-3' core sequence and plays a key role in adipogenesis and liver development. Required for adipogenesis: regulates triglyceride metabolism in adipocytes by regulating expression of adipogenic genes. This chain is AT-rich interactive domain-containing protein 5B (arid5b), found in Danio rerio (Zebrafish).